Consider the following 361-residue polypeptide: Probable dual-specificity RNA methyltransferase RlmN (361 aa).

The Proton acceptor role is filled by Glu91. The 233-residue stretch at 97–329 (QHYGLSVCVT…KKKGVNCVVR (233 aa)) folds into the Radical SAM core domain. Cys104 and Cys340 are oxidised to a cystine. Residues Cys111, Cys115, and Cys118 each contribute to the [4Fe-4S] cluster site. S-adenosyl-L-methionine is bound by residues 163-164 (GE), Ser195, 218-220 (SLH), and Asn296. Residue Cys340 is the S-methylcysteine intermediate of the active site.

The protein belongs to the radical SAM superfamily. RlmN family. [4Fe-4S] cluster is required as a cofactor.

The protein localises to the cytoplasm. It carries out the reaction adenosine(2503) in 23S rRNA + 2 reduced [2Fe-2S]-[ferredoxin] + 2 S-adenosyl-L-methionine = 2-methyladenosine(2503) in 23S rRNA + 5'-deoxyadenosine + L-methionine + 2 oxidized [2Fe-2S]-[ferredoxin] + S-adenosyl-L-homocysteine. The catalysed reaction is adenosine(37) in tRNA + 2 reduced [2Fe-2S]-[ferredoxin] + 2 S-adenosyl-L-methionine = 2-methyladenosine(37) in tRNA + 5'-deoxyadenosine + L-methionine + 2 oxidized [2Fe-2S]-[ferredoxin] + S-adenosyl-L-homocysteine. Its function is as follows. Specifically methylates position 2 of adenine 2503 in 23S rRNA and position 2 of adenine 37 in tRNAs. The chain is Probable dual-specificity RNA methyltransferase RlmN from Streptococcus pneumoniae serotype 4 (strain ATCC BAA-334 / TIGR4).